The sequence spans 286 residues: 2-hydroxy-6-oxo-6-phenylhexa-2,4-dienoate hydrolase (286 aa).

Substrate is bound by residues 42 to 43 (GG), asparagine 51, lysine 111, serine 180, and arginine 190. One can recognise an AB hydrolase-1 domain in the interval 173–271 (NVFLFDQSLI…RCVHWAQWEH (99 aa)). Histidine 265 acts as the Proton acceptor in catalysis. Position 266 (tryptophan 266) interacts with substrate.

It belongs to the AB hydrolase superfamily. BphD family. In terms of assembly, homodimer.

It catalyses the reaction 2,6-dioxo-6-phenylhexa-3-enoate + H2O = 2-oxopent-4-enoate + benzoate + H(+). It participates in xenobiotic degradation; biphenyl degradation; 2-hydroxy-2,4-pentadienoate and benzoate from biphenyl: step 4/4. In terms of biological role, catalyzes an unusual C-C bond hydrolysis of 2-hydroxy-6-oxo-6-phenylhexa-2,4-dienoic acid (HOPDA) to produce benzoic acid and 2-hydroxy-2,4-pentadienoic acid (HPD). The protein is 2-hydroxy-6-oxo-6-phenylhexa-2,4-dienoate hydrolase of Delftia acidovorans (Pseudomonas acidovorans).